Consider the following 108-residue polypeptide: Large ribosomal subunit protein uL24 (108 aa).

Belongs to the universal ribosomal protein uL24 family. As to quaternary structure, part of the 50S ribosomal subunit.

In terms of biological role, one of two assembly initiator proteins, it binds directly to the 5'-end of the 23S rRNA, where it nucleates assembly of the 50S subunit. Functionally, one of the proteins that surrounds the polypeptide exit tunnel on the outside of the subunit. In Mycoplasma genitalium (strain ATCC 33530 / DSM 19775 / NCTC 10195 / G37) (Mycoplasmoides genitalium), this protein is Large ribosomal subunit protein uL24.